A 262-amino-acid polypeptide reads, in one-letter code: Expansin-A21 (262 aa).

Residues 1–29 form the signal peptide; the sequence is MKLLEKMTYVECFMIIMATWFMFISYSHG. One can recognise an Expansin-like EG45 domain in the interval 64-169; that stretch reads EGACGYGDLN…RRVPCAKTGG (106 aa). In terms of domain architecture, Expansin-like CBD spans 179 to 258; the sequence is NILTILPYNV…SWGFGQTFDG (80 aa).

This sequence belongs to the expansin family. Expansin A subfamily.

It is found in the secreted. Its subcellular location is the cell wall. It localises to the membrane. In terms of biological role, causes loosening and extension of plant cell walls by disrupting non-covalent bonding between cellulose microfibrils and matrix glucans. No enzymatic activity has been found. This chain is Expansin-A21 (EXPA21), found in Arabidopsis thaliana (Mouse-ear cress).